Here is a 190-residue protein sequence, read N- to C-terminus: Thymidylate kinase (190 aa).

7 to 14 (GVDTCGKS) serves as a coordination point for ATP.

Belongs to the thymidylate kinase family.

The enzyme catalyses dTMP + ATP = dTDP + ADP. Functionally, phosphorylation of dTMP to form dTDP in both de novo and salvage pathways of dTTP synthesis. The sequence is that of Thymidylate kinase from Wolinella succinogenes (strain ATCC 29543 / DSM 1740 / CCUG 13145 / JCM 31913 / LMG 7466 / NCTC 11488 / FDC 602W) (Vibrio succinogenes).